A 565-amino-acid chain; its full sequence is uncharacterized protein (565 aa).

Transmembrane regions (helical) follow at residues 28–48, 73–93, 109–129, 169–189, 262–282, 315–335, 364–384, 393–413, 461–481, and 526–546; these read IFHFYIYCILLGAVLLFLPFA, ASYGFLDALFLAVSAFSDTGL, VLAILLQLGGIGFVVIAFLVW, LFLFMVELLYGFLYTILFYFI, IVIQWLAISQIIFGGIGYPVL, LIVTAWCFLMLLMVEFIVITS, SLIFGPIPAASRVMQLWFGVI, VFPWSAESDIIKGIMVIAMFI, AFLVAVFGLVSVVLIAILLPL, and TLGLLMIMGQVGVSSSVLTFV.

It belongs to the TrkH potassium transport family.

The protein resides in the cell membrane. This is an uncharacterized protein from Mycoplasma pneumoniae (strain ATCC 29342 / M129 / Subtype 1) (Mycoplasmoides pneumoniae).